A 101-amino-acid polypeptide reads, in one-letter code: Small ribosomal subunit protein bS18c (101 aa).

This sequence belongs to the bacterial ribosomal protein bS18 family. In terms of assembly, part of the 30S ribosomal subunit.

The protein resides in the plastid. It is found in the chloroplast. This Coffea arabica (Arabian coffee) protein is Small ribosomal subunit protein bS18c.